Here is a 137-residue protein sequence, read N- to C-terminus: Large-conductance mechanosensitive channel (137 aa).

Transmembrane regions (helical) follow at residues 10–30 and 76–96; these read FAMRGNVVDLAVGVIIGAAFG and GTFIQSIFDFVIVALAIFSAV.

Belongs to the MscL family. As to quaternary structure, homopentamer.

The protein localises to the cell inner membrane. Its function is as follows. Channel that opens in response to stretch forces in the membrane lipid bilayer. May participate in the regulation of osmotic pressure changes within the cell. The sequence is that of Large-conductance mechanosensitive channel from Yersinia pseudotuberculosis serotype O:1b (strain IP 31758).